The sequence spans 137 residues: MPDVPSTLSHDWAFAVFLLGVCGLIAFMLGVSSLLGSKAWGRSKNEPFESGMLPTGNARLRLSAKFYLVAMLFVIFDVEALFLFAWAVSVRESGWVGLVGATVFITILFAGLVYESAIGALDWAPEGRRKRQAKLKQ.

The next 3 helical transmembrane spans lie at 12–32 (WAFA…LGVS), 68–88 (LVAM…AWAV), and 94–114 (GWVG…GLVY).

The protein belongs to the complex I subunit 3 family. As to quaternary structure, NDH-1 is composed of 13 different subunits. Subunits NuoA, H, J, K, L, M, N constitute the membrane sector of the complex.

It localises to the cell inner membrane. The catalysed reaction is a quinone + NADH + 5 H(+)(in) = a quinol + NAD(+) + 4 H(+)(out). Its function is as follows. NDH-1 shuttles electrons from NADH, via FMN and iron-sulfur (Fe-S) centers, to quinones in the respiratory chain. The immediate electron acceptor for the enzyme in this species is believed to be ubiquinone. Couples the redox reaction to proton translocation (for every two electrons transferred, four hydrogen ions are translocated across the cytoplasmic membrane), and thus conserves the redox energy in a proton gradient. In Ectopseudomonas mendocina (strain ymp) (Pseudomonas mendocina), this protein is NADH-quinone oxidoreductase subunit A.